The following is a 176-amino-acid chain: Ribosome maturation factor RimM (176 aa).

Residues 97-176 form the PRC barrel domain; it reads EDEFYWRDLI…QILVDWDPDF (80 aa).

The protein belongs to the RimM family. Binds ribosomal protein uS19.

Its subcellular location is the cytoplasm. Functionally, an accessory protein needed during the final step in the assembly of 30S ribosomal subunit, possibly for assembly of the head region. Essential for efficient processing of 16S rRNA. May be needed both before and after RbfA during the maturation of 16S rRNA. It has affinity for free ribosomal 30S subunits but not for 70S ribosomes. The polypeptide is Ribosome maturation factor RimM (Shewanella sp. (strain MR-4)).